The primary structure comprises 46 residues: Large ribosomal subunit protein bL34c (46 aa).

This sequence belongs to the bacterial ribosomal protein bL34 family.

The protein localises to the plastid. Its subcellular location is the chloroplast. The chain is Large ribosomal subunit protein bL34c (rpl34) from Guillardia theta (Cryptophyte).